Here is a 496-residue protein sequence, read N- to C-terminus: L-arabinose isomerase (496 aa).

Mn(2+)-binding residues include Glu302, Glu329, His346, and His445.

This sequence belongs to the arabinose isomerase family. Mn(2+) serves as cofactor.

It catalyses the reaction beta-L-arabinopyranose = L-ribulose. It functions in the pathway carbohydrate degradation; L-arabinose degradation via L-ribulose; D-xylulose 5-phosphate from L-arabinose (bacterial route): step 1/3. Functionally, catalyzes the conversion of L-arabinose to L-ribulose. This Thermotoga petrophila (strain ATCC BAA-488 / DSM 13995 / JCM 10881 / RKU-1) protein is L-arabinose isomerase.